The sequence spans 725 residues: Glutamine-dependent NAD(+) synthetase (725 aa).

A CN hydrolase domain is found at V5–L275. E45 serves as the catalytic Proton acceptor; for glutaminase activity. The active-site For glutaminase activity is the K114. C175 functions as the Nucleophile; for glutaminase activity in the catalytic mechanism. The ligase stretch occupies residues Y325–V706. P355–S362 provides a ligand contact to ATP. The active site involves S357.

In the C-terminal section; belongs to the NAD synthetase family. As to quaternary structure, homohexamer. As to expression, highly expressed in small intestine, kidney, liver and testis. Weakly expressed in skeletal muscle, spleen, lung, heart and brain.

It carries out the reaction deamido-NAD(+) + L-glutamine + ATP + H2O = L-glutamate + AMP + diphosphate + NAD(+) + H(+). Its pathway is cofactor biosynthesis; NAD(+) biosynthesis; NAD(+) from deamido-NAD(+) (L-Gln route): step 1/1. Its function is as follows. Catalyzes the final step of the nicotinamide adenine dinucleotide (NAD) de novo synthesis pathway, the ATP-dependent amidation of deamido-NAD using L-glutamine as a nitrogen source. The protein is Glutamine-dependent NAD(+) synthetase (Nadsyn1) of Mus musculus (Mouse).